The following is a 279-amino-acid chain: Large ribosomal subunit protein uL5c (279 aa).

Disordered stretches follow at residues 1–23 (MAATAVTLPSSPAPFPVTTTASS) and 40–63 (LRVAASAAADAPPKPAPPPTSPSG). The transit peptide at 1 to 43 (MAATAVTLPSSPAPFPVTTTASSSRNVRLLLRSPPPRRALRVA) directs the protein to the chloroplast. The span at 41 to 50 (RVAASAAADA) shows a compositional bias: low complexity. A compositionally biased stretch (pro residues) spans 51-60 (PPKPAPPPTS).

Belongs to the universal ribosomal protein uL5 family. As to quaternary structure, part of the 50S ribosomal subunit; contacts the 5S rRNA.

It is found in the plastid. It localises to the chloroplast. Functionally, binds 5S rRNA, forms part of the central protuberance of the 50S subunit. The polypeptide is Large ribosomal subunit protein uL5c (RPL5) (Oryza sativa subsp. japonica (Rice)).